The chain runs to 459 residues: tRNA modification GTPase MnmE (459 aa).

(6S)-5-formyl-5,6,7,8-tetrahydrofolate-binding residues include arginine 22, glutamate 85, and arginine 124. A TrmE-type G domain is found at 221 to 380; it reads GLSTVIVGKP…LEIQIRDLFF (160 aa). Residue asparagine 231 participates in K(+) binding. Residues 231 to 236, 250 to 256, and 275 to 278 contribute to the GTP site; these read NVGKSS, TEVAGTT, and DTAG. Mg(2+) is bound at residue serine 235. K(+)-binding residues include threonine 250, valine 252, and threonine 255. Mg(2+) is bound at residue threonine 256. (6S)-5-formyl-5,6,7,8-tetrahydrofolate is bound at residue lysine 459.

Belongs to the TRAFAC class TrmE-Era-EngA-EngB-Septin-like GTPase superfamily. TrmE GTPase family. As to quaternary structure, homodimer. Heterotetramer of two MnmE and two MnmG subunits. Requires K(+) as cofactor.

The protein localises to the cytoplasm. Functionally, exhibits a very high intrinsic GTPase hydrolysis rate. Involved in the addition of a carboxymethylaminomethyl (cmnm) group at the wobble position (U34) of certain tRNAs, forming tRNA-cmnm(5)s(2)U34. The chain is tRNA modification GTPase MnmE from Staphylococcus aureus (strain USA300 / TCH1516).